Here is an 84-residue protein sequence, read N- to C-terminus: Beta-defensin 119 (84 aa).

Residues 1-21 (MKFLFLFLAILLATKIPVISG) form the signal peptide. 3 disulfide bridges follow: Cys-28-Cys-55, Cys-35-Cys-49, and Cys-39-Cys-56.

It belongs to the beta-defensin family.

The protein resides in the secreted. In terms of biological role, has antibacterial activity. The protein is Beta-defensin 119 (DEFB119) of Macaca fascicularis (Crab-eating macaque).